Reading from the N-terminus, the 703-residue chain is Leucine zipper putative tumor suppressor 3 (703 aa).

Disordered regions lie at residues 1-22 (MAPA…PHLF), 40-190 (RADP…SEPL), and 204-347 (FHSM…PPSP). Residues 96-107 (GSFPGPRSSGSG) show a composition bias toward low complexity. Residues 109-124 (NRERPGPGRYPSEDKV) show a composition bias toward basic and acidic residues. Positions 205–218 (HSMQNLCPPQTNGT) are enriched in polar residues. The segment covering 251-268 (DSGRNSLTSLPTYSSSYS) has biased composition (low complexity). The segment covering 290–299 (SSGGGGGGSG) has biased composition (gly residues). Residues 304-324 (GTSDSGRASSKSGSSSSMGRS) are compositionally biased toward low complexity. Gly residues predominate over residues 325–336 (GHLGSGEGGNGG). Residues Ser-346 and Ser-348 each carry the phosphoserine modification. Coiled-coil stretches lie at residues 348–526 (SALI…SLRD) and 600–669 (TRAL…RLRE). A disordered region spans residues 665–703 (RRLRERGAAGGSRTPTPQHGEEEKAWTPSRLERIESTEI). Residues 683 to 703 (HGEEEKAWTPSRLERIESTEI) show a composition bias toward basic and acidic residues.

This sequence belongs to the LZTS3 family. Interacts (via C-terminus) with SHANK3 (via PDZ domain). Interacts (via coiled coil) with SIPA1L1. Can form homooligomers. As to expression, detected in brain, with highest expression in brain cortex, caudate putamen, cerebellum and hippocampus. Detected in neuropil (at protein level). Detected in brain and kidney.

The protein resides in the synapse. The protein localises to the postsynaptic density. It localises to the cell projection. It is found in the dendritic spine. Its subcellular location is the dendrite. The protein resides in the cytoplasm. The protein localises to the cytoskeleton. May be involved in promoting the maturation of dendritic spines, probably via regulating SIPA1L1 levels at the postsynaptic density of synapses. In Rattus norvegicus (Rat), this protein is Leucine zipper putative tumor suppressor 3.